We begin with the raw amino-acid sequence, 338 residues long: GTPase Obg (338 aa).

Positions 1–159 constitute an Obg domain; that stretch reads MQFIDEVKIH…RWLRLELKLL (159 aa). One can recognise an OBG-type G domain in the interval 160 to 331; it reads ADVGLLGFPN…LLDEIARSLW (172 aa). GTP-binding positions include 166–173, 191–195, 213–216, 283–286, and 312–314; these read GFPNVGKS, FTTLK, DIPG, NKMD, and SAA. Positions 173 and 193 each coordinate Mg(2+).

This sequence belongs to the TRAFAC class OBG-HflX-like GTPase superfamily. OBG GTPase family. As to quaternary structure, monomer. Mg(2+) serves as cofactor.

It is found in the cytoplasm. An essential GTPase which binds GTP, GDP and possibly (p)ppGpp with moderate affinity, with high nucleotide exchange rates and a fairly low GTP hydrolysis rate. Plays a role in control of the cell cycle, stress response, ribosome biogenesis and in those bacteria that undergo differentiation, in morphogenesis control. The chain is GTPase Obg from Geobacter sulfurreducens (strain ATCC 51573 / DSM 12127 / PCA).